The primary structure comprises 188 residues: MAAAPGARLLRAACASVAFRGLDCRRLLVCGTRAGPAVPQWTPSPHTLAEAGPGRPLSVSARARSSSEDKVTVHFKNRDGETLTTKGKVGDSLLDVVIENNLDIDGFGACEGTLACSTCHLIFEDHIYEKLDAITDEENDMLDLAFGLTNRSRLGCQVCLTKAMDNMTVRVPEAVADVRQSVDMSKNS.

The N-terminal 64 residues, 1-64 (MAAAPGARLL…RPLSVSARAR (64 aa)), are a transit peptide targeting the mitochondrion. Ser-67 is modified (phosphoserine). A 2Fe-2S ferredoxin-type domain is found at 69–175 (DKVTVHFKNR…NMTVRVPEAV (107 aa)). Residue Lys-70 is modified to N6-acetyllysine; alternate. An N6-succinyllysine; alternate modification is found at Lys-70. [2Fe-2S] cluster is bound by residues Cys-110, Cys-116, Cys-119, and Cys-156. Residue Lys-162 is modified to N6-succinyllysine. The residue at position 181 (Ser-181) is a Phosphoserine.

The protein belongs to the adrenodoxin/putidaredoxin family. As to quaternary structure, interacts with CYP11A1. [2Fe-2S] cluster is required as a cofactor. As to expression, found in all tissues, most abundant in adrenals, ovaries and testes.

The protein resides in the mitochondrion matrix. Its function is as follows. Essential for the synthesis of various steroid hormones. Participates in the reduction of mitochondrial cytochrome P450 for steroidogenesis. Transfers electrons from adrenodoxin reductase to CYP11A1, a cytochrome P450 that catalyzes cholesterol side-chain cleavage. Does not form a ternary complex with adrenodoxin reductase and CYP11A1 but shuttles between the two enzymes to transfer electrons. The protein is Adrenodoxin, mitochondrial (Fdx1) of Rattus norvegicus (Rat).